The primary structure comprises 397 residues: Argininosuccinate synthase (397 aa).

9-17 provides a ligand contact to ATP; that stretch reads AYSGGLDTS. Y87 is an L-citrulline binding site. G117 is a binding site for ATP. Residues T119, N123, and D124 each coordinate L-aspartate. N123 provides a ligand contact to L-citrulline. L-citrulline contacts are provided by R127, S175, S184, E257, and Y269.

This sequence belongs to the argininosuccinate synthase family. Type 1 subfamily. In terms of assembly, homotetramer.

It localises to the cytoplasm. The enzyme catalyses L-citrulline + L-aspartate + ATP = 2-(N(omega)-L-arginino)succinate + AMP + diphosphate + H(+). Its pathway is amino-acid biosynthesis; L-arginine biosynthesis; L-arginine from L-ornithine and carbamoyl phosphate: step 2/3. The sequence is that of Argininosuccinate synthase from Dictyoglomus thermophilum (strain ATCC 35947 / DSM 3960 / H-6-12).